Reading from the N-terminus, the 104-residue chain is Large ribosomal subunit protein bL21 (104 aa).

This sequence belongs to the bacterial ribosomal protein bL21 family. As to quaternary structure, part of the 50S ribosomal subunit. Contacts protein L20.

Its function is as follows. This protein binds to 23S rRNA in the presence of protein L20. This is Large ribosomal subunit protein bL21 from Helicobacter hepaticus (strain ATCC 51449 / 3B1).